Reading from the N-terminus, the 1052-residue chain is Germline survival defective-1 (1052 aa).

The first 25 residues, 1 to 25 (MRCLISYLFHSFLIFLKFIRSDVTA), serve as a signal peptide directing secretion. 5 disordered regions span residues 41-320 (LMKS…DPKN), 478-543 (VNGI…QSVP), 667-689 (PSSQ…EEFE), 933-965 (KQTL…NSYA), and 1033-1052 (SNNT…NSNF). Low complexity predominate over residues 67–145 (ATATAAATTQ…SSTSSTSQQT (79 aa)). A compositionally biased stretch (polar residues) spans 163 to 172 (TSNTANSQSG). A compositionally biased stretch (basic and acidic residues) spans 178-190 (TNKDRPKEKEKNT). A compositionally biased stretch (low complexity) spans 244-279 (NAKSSGFLSNSSLSSAGQISASSAPPVSTTPTAIPI). A compositionally biased stretch (basic and acidic residues) spans 305 to 320 (KRDEEPMPYKSTDPKN). The tract at residues 424-732 (QHPPGLPPLL…QIEKNDNLFS (309 aa)) is gld-4 binding. The span at 480-514 (GISNNIPSDRQQLDSKPNTARGSSGNINQSNTTSP) shows a compositional bias: polar residues. Positions 674–689 (DENDTDSDHESEEEFE) are enriched in acidic residues. Residues 892 to 1052 (PIELPVNMQP…SGGGNQNSNF (161 aa)) form a gld-3 binding region. Positions 950–963 (EGSQQNGGTSSSNS) are enriched in low complexity. The span at 1038–1052 (GVNGNSGGGNQNSNF) shows a compositional bias: gly residues.

Isoform C interacts (via C-terminus) with gld-3 isoform A (via C-terminus) in an RNA-independent manner. Isoform C interacts with gld-4. In terms of tissue distribution, expressed in the germline (at protein level). In the early embryo is expressed in all cells, then becomes gradually restricted to the germ cell lineage and enriches in P granules (at protein level). In adult hermaphrodites, is expressed in the mitotic region, accumulates during early stages of meiotic prophase I and is slightly less abundant in maturing oocytes (at protein level).

It localises to the cytoplasm. Its subcellular location is the cytoplasmic granule. Its function is as follows. Required maternally for germline survival by forming a maternal complex with gld-3. During hermaphrodite development forms a complex with gld-3 which promotes the sperm/oocyte switch freeing the translational repressor fbf to turn off sperm promoting factors. Required for proper oocyte differentiation and oogenic meiotic arrest. Stimulates the enzymatic activity of gld-4 and together they prevent gld-1 mRNA degradation. This Caenorhabditis elegans protein is Germline survival defective-1.